The chain runs to 325 residues: Pyruvate dehydrogenase E1 component subunit beta (325 aa).

E60 is a binding site for thiamine diphosphate.

Heterodimer of an alpha and a beta chain. Thiamine diphosphate serves as cofactor.

It carries out the reaction N(6)-[(R)-lipoyl]-L-lysyl-[protein] + pyruvate + H(+) = N(6)-[(R)-S(8)-acetyldihydrolipoyl]-L-lysyl-[protein] + CO2. The pyruvate dehydrogenase complex catalyzes the overall conversion of pyruvate to acetyl-CoA and CO(2). It contains multiple copies of three enzymatic components: pyruvate dehydrogenase (E1), dihydrolipoamide acetyltransferase (E2) and lipoamide dehydrogenase (E3). The polypeptide is Pyruvate dehydrogenase E1 component subunit beta (pdhB) (Geobacillus stearothermophilus (Bacillus stearothermophilus)).